The chain runs to 241 residues: tRNA pseudouridine synthase B (241 aa).

Residue D52 is the Nucleophile of the active site.

It belongs to the pseudouridine synthase TruB family. Type 1 subfamily.

It catalyses the reaction uridine(55) in tRNA = pseudouridine(55) in tRNA. Its function is as follows. Responsible for synthesis of pseudouridine from uracil-55 in the psi GC loop of transfer RNAs. In Chloroherpeton thalassium (strain ATCC 35110 / GB-78), this protein is tRNA pseudouridine synthase B.